The primary structure comprises 144 residues: Antigenic protein SchS21 (144 aa).

A glycan (N-linked (GlcNAc...) asparagine) is linked at N36. An igE-binding epitope region spans residues 91–105; sequence VKQMWPAESRKPMSG.

As to quaternary structure, homodimer. Requires Mg(2+) as cofactor.

It is found in the secreted. In terms of biological role, has exodeoxyribonuclease activity with lambda-DNA and salmon testes dsDNA. No activity with circular plasmid DNA. The physiological role of this enzyme may be to degrade environmental DNA, and thus mobilize nitrogen for uptake. This chain is Antigenic protein SchS21, found in Stachybotrys chartarum (Toxic black mold).